The chain runs to 586 residues: Retron Ec67 protein (586 aa).

Residues 29-262 enclose the Reverse transcriptase domain; that stretch reads FLTNVLYRIG…SRQEVTGLTV (234 aa). Mg(2+)-binding residues include Asp-120, Asp-201, and Asp-202.

The protein belongs to the bacterial reverse transcriptase family.

It catalyses the reaction DNA(n) + a 2'-deoxyribonucleoside 5'-triphosphate = DNA(n+1) + diphosphate. It carries out the reaction Endonucleolytic cleavage to 5'-phosphomonoester.. Reverse transcriptase (RT) component of antiviral defense system retron Ec67, minimally composed of a non-coding RNA (ncRNA) and this RT. Expression of these 2 elements confers protection against bacteriophage T5. At multiplicity of infection (MOI) of 0.02 cultures grow normally when infected with T5 without collapsing, at MOI 2 cultures enter growth stasis. Responsible for synthesis of msDNA-Ec67 (a branched molecule with RNA linked by a 2',5'-phosphodiester bond to ssDNA). The retron transcript serves as primer (from a conserved internal G residue) and template for the reaction, and codes for the RT. Can use other retrons as substrate (msDNA-Mx162 and msDNA-Ec86). Also able to synthesize DNA from a DNA template at least in vitro, although the enzyme is less active with a DNA template. This is Retron Ec67 protein from Escherichia coli.